Consider the following 462-residue polypeptide: Argininosuccinate lyase (462 aa).

Belongs to the lyase 1 family. Argininosuccinate lyase subfamily.

The protein resides in the cytoplasm. It catalyses the reaction 2-(N(omega)-L-arginino)succinate = fumarate + L-arginine. The protein operates within amino-acid biosynthesis; L-arginine biosynthesis; L-arginine from L-ornithine and carbamoyl phosphate: step 3/3. The protein is Argininosuccinate lyase of Exiguobacterium sp. (strain ATCC BAA-1283 / AT1b).